The primary structure comprises 843 residues: Beta-mannosidase B (843 aa).

Catalysis depends on glutamate 430, which acts as the Proton donor. Asparagine 721 carries an N-linked (GlcNAc...) asparagine glycan.

Belongs to the glycosyl hydrolase 2 family. Beta-mannosidase B subfamily.

The catalysed reaction is Hydrolysis of terminal, non-reducing beta-D-mannose residues in beta-D-mannosides.. It participates in glycan metabolism; N-glycan degradation. In terms of biological role, exoglycosidase that cleaves the single beta-linked mannose residue from the non-reducing end of beta-mannosidic oligosaccharides of various complexity and length. Prefers mannobiose over mannotriose and has no activity against polymeric mannan. Is also severely restricted by galactosyl substitutions at the +1 subsite. The sequence is that of Beta-mannosidase B (mndB) from Aspergillus terreus (strain NIH 2624 / FGSC A1156).